Reading from the N-terminus, the 293-residue chain is Acetylglutamate kinase (293 aa).

Residues Gly68–Gly69, Arg90, and Asn189 each bind substrate.

It belongs to the acetylglutamate kinase family. ArgB subfamily.

It is found in the cytoplasm. The enzyme catalyses N-acetyl-L-glutamate + ATP = N-acetyl-L-glutamyl 5-phosphate + ADP. Its pathway is amino-acid biosynthesis; L-arginine biosynthesis; N(2)-acetyl-L-ornithine from L-glutamate: step 2/4. In terms of biological role, catalyzes the ATP-dependent phosphorylation of N-acetyl-L-glutamate. This Mycolicibacterium smegmatis (strain ATCC 700084 / mc(2)155) (Mycobacterium smegmatis) protein is Acetylglutamate kinase.